Here is a 240-residue protein sequence, read N- to C-terminus: Uridylate kinase (240 aa).

12 to 15 (KLSG) is an ATP binding site. The segment at 20 to 25 (GEQGNG) is involved in allosteric activation by GTP. Gly54 contacts UMP. ATP is bound by residues Gly55 and Arg59. UMP-binding positions include Asp74 and 135–142 (TGNPYFST). Positions 163, 169, and 172 each coordinate ATP.

It belongs to the UMP kinase family. In terms of assembly, homohexamer. Interacts with BrxC.

It localises to the cytoplasm. It catalyses the reaction UMP + ATP = UDP + ADP. It functions in the pathway pyrimidine metabolism; CTP biosynthesis via de novo pathway; UDP from UMP (UMPK route): step 1/1. With respect to regulation, allosterically activated by GTP. Can also be activated by dGTP and 3'-anthraniloyl-2'-deoxyguanosine-5'-triphosphate (Ant-dGTP). Inhibited by UTP, 5-bromo-UTP and 5-iodo-UTP. Functionally, catalyzes the reversible phosphorylation of UMP to UDP, with ATP or dATP as the most efficient phosphate donors. Is also able to phosphorylate 5-fluoro-UMP and 6-aza-UMP. The protein is Uridylate kinase (pyrH) of Bacillus subtilis (strain 168).